Reading from the N-terminus, the 97-residue chain is Co-chaperonin GroES (97 aa).

It belongs to the GroES chaperonin family. Heptamer of 7 subunits arranged in a ring. Interacts with the chaperonin GroEL.

It localises to the cytoplasm. Together with the chaperonin GroEL, plays an essential role in assisting protein folding. The GroEL-GroES system forms a nano-cage that allows encapsulation of the non-native substrate proteins and provides a physical environment optimized to promote and accelerate protein folding. GroES binds to the apical surface of the GroEL ring, thereby capping the opening of the GroEL channel. In Pseudomonas putida (strain GB-1), this protein is Co-chaperonin GroES.